Consider the following 164-residue polypeptide: NADPH-dependent 7-cyano-7-deazaguanine reductase (164 aa).

The Thioimide intermediate role is filled by cysteine 55. Aspartate 62 (proton donor) is an active-site residue. Substrate contacts are provided by residues 77–79 (VES) and 96–97 (HE).

The protein belongs to the GTP cyclohydrolase I family. QueF type 1 subfamily.

The protein resides in the cytoplasm. It carries out the reaction 7-aminomethyl-7-carbaguanine + 2 NADP(+) = 7-cyano-7-deazaguanine + 2 NADPH + 3 H(+). It functions in the pathway tRNA modification; tRNA-queuosine biosynthesis. Its function is as follows. Catalyzes the NADPH-dependent reduction of 7-cyano-7-deazaguanine (preQ0) to 7-aminomethyl-7-deazaguanine (preQ1). This chain is NADPH-dependent 7-cyano-7-deazaguanine reductase, found in Bacillus velezensis (strain DSM 23117 / BGSC 10A6 / LMG 26770 / FZB42) (Bacillus amyloliquefaciens subsp. plantarum).